The sequence spans 201 residues: MSKVLVLKSSILAGYSQSGQLTDYFIEQWREKHVADEITVRDLAANPVPVLDGELVGAMRPGDAPLTPRQQDALALSDELIAELKAHDVIVIAAPMYNFNIPTQLKNYFDLIARAGITFRYTEKGPEGLVTGKRAVVLSSRGGIHKDTPTDLIAPYLKVFLGFIGITDVNFVFAEGIAYGPEVAAKAQADAKAAIDSVVAA.

Residues S10, 16–18, 96–99, and 140–143 contribute to the FMN site; these read SQS, MYNF, and SRGG.

Belongs to the azoreductase type 1 family. As to quaternary structure, homodimer. It depends on FMN as a cofactor.

The catalysed reaction is 2 a quinone + NADH + H(+) = 2 a 1,4-benzosemiquinone + NAD(+). It catalyses the reaction N,N-dimethyl-1,4-phenylenediamine + anthranilate + 2 NAD(+) = 2-(4-dimethylaminophenyl)diazenylbenzoate + 2 NADH + 2 H(+). Quinone reductase that provides resistance to thiol-specific stress caused by electrophilic quinones. In terms of biological role, also exhibits azoreductase activity. Catalyzes the reductive cleavage of the azo bond in aromatic azo compounds to the corresponding amines. In Salmonella paratyphi A (strain ATCC 9150 / SARB42), this protein is FMN-dependent NADH:quinone oxidoreductase.